We begin with the raw amino-acid sequence, 839 residues long: Taste receptor type 1 member 2 (839 aa).

The first 19 residues, 1-19, serve as a signal peptide directing secretion; sequence MGPRATTICSLFFLLWVLA. The Extracellular portion of the chain corresponds to 20–566; that stretch reads EPAENSDFYL…AFLEWHEAPT (547 aa). N-linked (GlcNAc...) asparagine glycans are attached at residues N84, N248, N292, N312, N368, N428, N487, and N527. Residues 567–587 traverse the membrane as a helical segment; that stretch reads IAVALLAALGFLSTLAILVIF. At 588–602 the chain is on the cytoplasmic side; sequence WRHFQTPMVRSAGGP. A helical transmembrane segment spans residues 603–623; sequence MCFLMLTLLLVAYMVVPVYVG. Over 624–635 the chain is Extracellular; it reads PPKVSTCLCRQA. A helical membrane pass occupies residues 636 to 656; sequence LFPLCFTICISCIAVRSFQII. Over 657–681 the chain is Cytoplasmic; sequence CAFKMASRFPRAYSYWVRYQGPYVS. Residues 682–702 traverse the membrane as a helical segment; that stretch reads MAFITVLKMVIVVIGMLATGL. Residues 703 to 727 are Extracellular-facing; the sequence is NPTTRTDPDDPKIMIVSCNPNYRNS. Residues 728-748 traverse the membrane as a helical segment; sequence LLFNTSLDLLLSVVGFSFANM. The Cytoplasmic portion of the chain corresponds to 749 to 760; it reads GKELPTNYNEAK. Residues 761–781 form a helical membrane-spanning segment; the sequence is FITLSMTFYFTSSISLCTFMS. The Extracellular portion of the chain corresponds to 782–784; the sequence is AYS. A helical transmembrane segment spans residues 785-805; it reads GVLVTIVDLLVTVLNLLAISL. Residues 806 to 839 are Cytoplasmic-facing; that stretch reads GYFGPKCYMILFYPERNTPAYFNSVIQGYTMTRD.

The protein belongs to the G-protein coupled receptor 3 family. TAS1R subfamily. In terms of assembly, forms heterodimers with TAS1R3.

Its subcellular location is the cell membrane. In terms of biological role, putative taste receptor. TAS1R2/TAS1R3 recognizes diverse natural and synthetic sweeteners. The chain is Taste receptor type 1 member 2 (TAS1R2) from Pongo pygmaeus (Bornean orangutan).